A 329-amino-acid polypeptide reads, in one-letter code: Malate dehydrogenase (329 aa).

12 to 18 (GAAGQIG) is a binding site for NAD(+). Positions 95 and 101 each coordinate substrate. Residues Asn-108, Gln-115, and 132–134 (VGN) contribute to the NAD(+) site. Positions 134 and 165 each coordinate substrate. Catalysis depends on His-190, which acts as the Proton acceptor.

It belongs to the LDH/MDH superfamily. MDH type 2 family. Homodimer.

It carries out the reaction (S)-malate + NAD(+) = oxaloacetate + NADH + H(+). Its activity is regulated as follows. Substrate inhibition is observed at high concentrations of oxaloacetate. Catalyzes the reversible oxidation of malate to oxaloacetate. Catalyzes the reduction of oxaloacetate more efficiently than the oxidation of malate. The polypeptide is Malate dehydrogenase (Syntrophobacter fumaroxidans (strain DSM 10017 / MPOB)).